We begin with the raw amino-acid sequence, 626 residues long: Procollagen galactosyltransferase 2 (626 aa).

The signal sequence occupies residues Met1–Ala27. N-linked (GlcNAc...) asparagine glycosylation is found at Asn97, Asn185, Asn382, and Asn580. A disordered region spans residues Asn604–Leu626. Positions Arg623 to Leu626 match the Prevents secretion from ER motif.

This sequence belongs to the glycosyltransferase 25 family. As to expression, expressed in brain and skeletal muscle.

The protein resides in the endoplasmic reticulum lumen. The enzyme catalyses (5R)-5-hydroxy-L-lysyl-[collagen] + UDP-alpha-D-galactose = (5R)-5-O-(beta-D-galactosyl)-5-hydroxy-L-lysyl-[collagen] + UDP + H(+). Beta-galactosyltransferase that transfers beta-galactose to hydroxylysine residues of collagen. This chain is Procollagen galactosyltransferase 2 (COLGALT2), found in Homo sapiens (Human).